The sequence spans 523 residues: uncharacterized protein (523 aa).

Residues 1 to 63 constitute a chloroplast transit peptide; the sequence is MACVSTCLIL…NRHGIAVVKA (63 aa). A run of 3 helical transmembrane segments spans residues 180 to 200, 386 to 406, and 423 to 443; these read VSFG…IIAL, ALVI…NTLL, and IYPL…IRWF.

The protein localises to the plastid. The protein resides in the chloroplast membrane. This is an uncharacterized protein from Arabidopsis thaliana (Mouse-ear cress).